The primary structure comprises 21 residues: Cupiennin-6e (21 aa).

Serine 21 carries the post-translational modification Serine amide.

In terms of tissue distribution, expressed by the venom gland.

It is found in the secreted. The sequence is that of Cupiennin-6e from Cupiennius salei (American wandering spider).